The primary structure comprises 197 residues: HTH-type transcriptional regulator BetI (197 aa).

The HTH tetR-type domain maps to Pro8–Leu68. A DNA-binding region (H-T-H motif) is located at residues Ser31 to Phe50.

It functions in the pathway amine and polyamine biosynthesis; betaine biosynthesis via choline pathway [regulation]. Its function is as follows. Repressor involved in the biosynthesis of the osmoprotectant glycine betaine. It represses transcription of the choline transporter BetT and the genes of BetAB involved in the synthesis of glycine betaine. This is HTH-type transcriptional regulator BetI from Pseudomonas savastanoi pv. phaseolicola (strain 1448A / Race 6) (Pseudomonas syringae pv. phaseolicola (strain 1448A / Race 6)).